A 187-amino-acid polypeptide reads, in one-letter code: Hypoxanthine/guanine phosphoribosyltransferase (187 aa).

The protein belongs to the purine/pyrimidine phosphoribosyltransferase family. Archaeal HPRT subfamily. Homodimer.

The protein localises to the cytoplasm. The enzyme catalyses IMP + diphosphate = hypoxanthine + 5-phospho-alpha-D-ribose 1-diphosphate. It carries out the reaction GMP + diphosphate = guanine + 5-phospho-alpha-D-ribose 1-diphosphate. Its pathway is purine metabolism; IMP biosynthesis via salvage pathway; IMP from hypoxanthine: step 1/1. In terms of biological role, catalyzes a salvage reaction resulting in the formation of IMP that is energically less costly than de novo synthesis. This Methanococcus voltae (strain ATCC BAA-1334 / A3) protein is Hypoxanthine/guanine phosphoribosyltransferase.